Reading from the N-terminus, the 189-residue chain is Putative transcription factor ovo-like protein 3 (189 aa).

Residues 1–20 are disordered; sequence MPRVFLVRSRRPQPPNWSHL. C2H2-type zinc fingers lie at residues 69 to 91, 97 to 119, 125 to 148, and 164 to 186; these read LGCP…LKCH, HVCH…MRTH, FRCG…AKVH, and HVCE…RTLH.

The protein belongs to the krueppel C2H2-type zinc-finger protein family.

Its subcellular location is the nucleus. Functionally, may act as a transcription regulator. The polypeptide is Putative transcription factor ovo-like protein 3 (Ovol3) (Mus musculus (Mouse)).